The chain runs to 623 residues: Endoglucanase 7 (623 aa).

Over 1-79 (MHPGNVWGGS…LGCVSVSRTV (79 aa)) the chain is Cytoplasmic. The chain crosses the membrane as a helical; Signal-anchor for type II membrane protein span at residues 80–100 (FLWTVGSIAVLFLVVALPIII). Over 101–623 (VKSLPRHKSA…TPPPPKAWKP (523 aa)) the chain is Extracellular. 7 N-linked (GlcNAc...) asparagine glycosylation sites follow: asparagine 116, asparagine 221, asparagine 328, asparagine 349, asparagine 412, asparagine 429, and asparagine 464. Histidine 517 is an active-site residue. Asparagine 548 carries N-linked (GlcNAc...) asparagine glycosylation. Residue aspartate 565 is part of the active site. A glycan (N-linked (GlcNAc...) asparagine) is linked at asparagine 571. Glutamate 574 is an active-site residue.

This sequence belongs to the glycosyl hydrolase 9 (cellulase E) family. In terms of tissue distribution, expressed in basal region of leaf blade and proximal parts of leaf and floral organ.

The protein resides in the membrane. It carries out the reaction Endohydrolysis of (1-&gt;4)-beta-D-glucosidic linkages in cellulose, lichenin and cereal beta-D-glucans.. The sequence is that of Endoglucanase 7 (KOR2) from Arabidopsis thaliana (Mouse-ear cress).